We begin with the raw amino-acid sequence, 632 residues long: RNA-binding post-transcriptional regulator csx1 (632 aa).

Phosphoserine; by MAPK sty1 occurs at positions 42 and 54. A phosphoserine mark is found at Ser67 and Ser69. RRM domains follow at residues Asp85–Gly167 and Phe182–Pro261. Residue Ser291 is modified to Phosphoserine; by MAPK sty1. An RRM 3 domain is found at Thr297–Asn369. Ser455 carries the phosphoserine; by MAPK sty1 modification. Residues Pro456–Leu476 are disordered. Over residues Ser466 to Leu476 the composition is skewed to low complexity.

As to quaternary structure, interacts with cip1 and cip2.

Its subcellular location is the cytoplasm. In terms of biological role, regulates global gene expression after oxidative stress. Interacts and stabilizes atf1 and pcr1 mRNAs after oxidative stress, thus controlling their turnover. This chain is RNA-binding post-transcriptional regulator csx1 (csx1), found in Schizosaccharomyces pombe (strain 972 / ATCC 24843) (Fission yeast).